The primary structure comprises 400 residues: Flavo-diiron protein FprA2 (400 aa).

A zinc metallo-hydrolase region spans residues 32 to 216; it reads GTSYNAYLIK…VVKGLDILDA (185 aa). Residues histidine 79, glutamate 81, aspartate 83, histidine 147, aspartate 166, and histidine 226 each coordinate Fe cation. The region spanning 257-397 is the Flavodoxin-like domain; sequence IPIFYCSAYG…KAFKFGEDFA (141 aa). FMN contacts are provided by residues 263 to 267 and 345 to 372; these read SAYGN and AFGS…KVFQ.

The protein in the N-terminal section; belongs to the zinc metallo-hydrolase group 3 family. Homotetramer. It depends on FMN as a cofactor. Fe cation is required as a cofactor.

It catalyses the reaction 2 NADH + O2 + 2 H(+) = 2 NAD(+) + 2 H2O. In terms of biological role, catalyzes the four-electron reduction of molecular oxygen to water. In fact, functions as the terminal component of an NADH oxidase (NADH:O(2) oxidoreductase) when using NADH:rubredoxin oxidoreductase (NROR) and rubredoxin (Rd) as electron transport intermediaries between NADH and FDP. Is thus able to reductively scavenge intracellular dioxygen and is part of an oxidative stress defense system in C.acetobutylicum, an obligate anaerobic bacterium. Can also serve as the terminal component of an NADH:nitric oxide oxidoreductase (NOR) with a catalytic efficiency comparable to that of its NADH oxidase activity, and therefore might have an in vivo role in scavenging nitric oxide. This Clostridium acetobutylicum (strain ATCC 824 / DSM 792 / JCM 1419 / IAM 19013 / LMG 5710 / NBRC 13948 / NRRL B-527 / VKM B-1787 / 2291 / W) protein is Flavo-diiron protein FprA2 (fprA2).